Consider the following 352-residue polypeptide: Peptide chain release factor 1 (352 aa).

Residue Q229 is modified to N5-methylglutamine.

The protein belongs to the prokaryotic/mitochondrial release factor family. Post-translationally, methylated by PrmC. Methylation increases the termination efficiency of RF1.

Its subcellular location is the cytoplasm. Functionally, peptide chain release factor 1 directs the termination of translation in response to the peptide chain termination codons UAG and UAA. The polypeptide is Peptide chain release factor 1 (Granulibacter bethesdensis (strain ATCC BAA-1260 / CGDNIH1)).